The following is a 426-amino-acid chain: Protein arginine N-methyltransferase 2 (426 aa).

Disordered stretches follow at residues 65-88 and 155-175; these read DEEE…GQES and DEEM…AVAA. The segment covering 73–88 has biased composition (polar residues); the sequence is NGVQTNGDRQTHGQES. A compositionally biased stretch (acidic residues) spans 155–168; the sequence is DEEMEEDGEQEQEQ. Residues 207–426 form the RMT2 domain; that stretch reads PSVTSSRYLN…YRLPLCKYMD (220 aa). S-adenosyl-L-methionine-binding positions include Tyr214, Met243, 263–268, 284–286, 311–312, and Asp331; these read HGMGIV, EAH, and WQ.

Belongs to the class I-like SAM-binding methyltransferase superfamily. RMT2 methyltransferase family. Monomer.

The protein resides in the cytoplasm. It is found in the nucleus. S-adenosyl-L-methionine-dependent protein-arginine N-methyltransferase that methylates the delta-nitrogen atom of arginine residues to form N5-methylarginine (type IV) in target proteins. Monomethylates ribosomal protein L12. In Emericella nidulans (strain FGSC A4 / ATCC 38163 / CBS 112.46 / NRRL 194 / M139) (Aspergillus nidulans), this protein is Protein arginine N-methyltransferase 2.